We begin with the raw amino-acid sequence, 558 residues long: Ankyrin repeat protein OPG189 (558 aa).

7 ANK repeats span residues 65–95, 169–205, 209–239, 243–272, 276–304, 339–368, and 372–401; these read YGEN…NINK, YGCT…DVDK, YGNT…NIDS, NRYT…NVNA, FGTT…ELEI, YNET…DFET, and SGCT…SLKI.

The protein belongs to the orthopoxvirus OPG189 protein family.

Contributes to viral release without involving rearrangement of host actin. In Homo sapiens (Human), this protein is Ankyrin repeat protein OPG189 (OPG189).